Consider the following 220-residue polypeptide: Charged multivesicular body protein 4b (220 aa).

Disordered regions lie at residues 1 to 22 (MSLF…SPQE) and 180 to 220 (EIGD…WAAN). 2 coiled-coil regions span residues 21-88 (QEAI…STIE) and 123-181 (IDKV…LLEI).

It belongs to the SNF7 family. In terms of assembly, probable core component of the endosomal sorting required for transport complex III (ESCRT-III). ESCRT-III components are thought to multimerize to form a flat lattice on the perimeter membrane of the endosome.

It localises to the cytoplasm. Its subcellular location is the cytosol. The protein resides in the late endosome membrane. It is found in the midbody. Its function is as follows. Probable core component of the endosomal sorting required for transport complex III (ESCRT-III) which is involved in multivesicular bodies (MVBs) formation and sorting of endosomal cargo proteins into MVBs. MVBs contain intraluminal vesicles (ILVs) that are generated by invagination and scission from the limiting membrane of the endosome and mostly are delivered to lysosomes enabling degradation of membrane proteins, such as stimulated growth factor receptors, lysosomal enzymes and lipids. The sequence is that of Charged multivesicular body protein 4b (chmp4b) from Danio rerio (Zebrafish).